The chain runs to 440 residues: Chromosome partition protein MukF (440 aa).

The tract at residues 208 to 236 (LSETSGTLRELQDTLEAAGDKLQANLLRI) is leucine-zipper.

It belongs to the MukF family. Interacts, and probably forms a ternary complex, with MukE and MukB via its C-terminal region. The complex formation is stimulated by calcium or magnesium. It is required for an interaction between MukE and MukB.

The protein localises to the cytoplasm. It is found in the nucleoid. Functionally, involved in chromosome condensation, segregation and cell cycle progression. May participate in facilitating chromosome segregation by condensation DNA from both sides of a centrally located replisome during cell division. Not required for mini-F plasmid partitioning. Probably acts via its interaction with MukB and MukE. Overexpression results in anucleate cells. It has a calcium binding activity. In Yersinia enterocolitica serotype O:8 / biotype 1B (strain NCTC 13174 / 8081), this protein is Chromosome partition protein MukF.